A 547-amino-acid chain; its full sequence is Chaperonin GroEL (547 aa).

Residues 30-33 (TLGP), Lys-51, 87-91 (DGTTT), Gly-415, and Asp-495 contribute to the ATP site.

The protein belongs to the chaperonin (HSP60) family. In terms of assembly, forms a cylinder of 14 subunits composed of two heptameric rings stacked back-to-back. Interacts with the co-chaperonin GroES.

The protein localises to the cytoplasm. It catalyses the reaction ATP + H2O + a folded polypeptide = ADP + phosphate + an unfolded polypeptide.. In terms of biological role, together with its co-chaperonin GroES, plays an essential role in assisting protein folding. The GroEL-GroES system forms a nano-cage that allows encapsulation of the non-native substrate proteins and provides a physical environment optimized to promote and accelerate protein folding. The chain is Chaperonin GroEL from Ralstonia nicotianae (strain ATCC BAA-1114 / GMI1000) (Ralstonia solanacearum).